The primary structure comprises 309 residues: Porphobilinogen deaminase (309 aa).

Position 244 is an S-(dipyrrolylmethanemethyl)cysteine (Cys244).

This sequence belongs to the HMBS family. Monomer. Dipyrromethane serves as cofactor.

It catalyses the reaction 4 porphobilinogen + H2O = hydroxymethylbilane + 4 NH4(+). Its pathway is porphyrin-containing compound metabolism; protoporphyrin-IX biosynthesis; coproporphyrinogen-III from 5-aminolevulinate: step 2/4. Tetrapolymerization of the monopyrrole PBG into the hydroxymethylbilane pre-uroporphyrinogen in several discrete steps. In Rhizobium meliloti (strain 1021) (Ensifer meliloti), this protein is Porphobilinogen deaminase.